The following is a 90-amino-acid chain: Probable Fe(2+)-trafficking protein (90 aa).

This sequence belongs to the Fe(2+)-trafficking protein family.

Could be a mediator in iron transactions between iron acquisition and iron-requiring processes, such as synthesis and/or repair of Fe-S clusters in biosynthetic enzymes. This is Probable Fe(2+)-trafficking protein from Leptothrix cholodnii (strain ATCC 51168 / LMG 8142 / SP-6) (Leptothrix discophora (strain SP-6)).